The chain runs to 628 residues: Alpha pinene synthase, chloroplastic (628 aa).

The transit peptide at 1–46 (MSLGCITPLASAMVGPKLVRPLIHHNPLFHHKPLNRPYLQTKIPLR) directs the protein to the chloroplast. 3 residues coordinate Mg(2+): Asp381, Asp385, and Glu532. Residues 381-385 (DDMYD) carry the DDXXD motif motif.

It belongs to the terpene synthase family. Tpsa subfamily. The cofactor is Mg(2+). Requires Mn(2+) as cofactor.

It localises to the plastid. The protein resides in the chloroplast. The enzyme catalyses (2E)-geranyl diphosphate = alpha-pinene + diphosphate. The protein operates within secondary metabolite biosynthesis; terpenoid biosynthesis. Monoterpene synthase involved in the biosynthesis of volatile compounds. Mediates the conversion of (2E)-geranyl diphosphate (GPP) into alpha-pinene. This is Alpha pinene synthase, chloroplastic from Chamaecyparis formosensis (Formosan cypress).